The chain runs to 876 residues: MSDSQASLRENVRLLGDCLGESMSNHLGEGFLEKVENIRLLSKNGRQSGDSAALIQALEALDDKEIVPVARAFNQFLNLSNIAEQYHRVHRRRTNESLGVYHNPVGDLLTRLSKQSFTAEQMISSLQSQSIELVLTAHPTEVVRRSLIRKYDNISSELEALDKDNILPLEETKHIRRLKEIITQAWHTDEIREDRPTPVDEAKWGFAVIEQSLWQAVPRFFRQLDEQFSEFSKEDRLPLDLAPIRFATWMGGDRDGNPNVTHKVTKEVTLLARWMAADLYIKDLNVLRSEFSMTQCNEALRARVGDSAQPYREVLRHLENKMLATKNWAKACLDGKPTSGEDIFLDIQELTDDLILCYQSLLDCGMKVIANGSLLDLIRCAATFGATLVRLDVRQDASRHIDALSAITRFYGLGDYAEWDEASRQAFLLTELNSKRPLLPMEWTPTAEVKEVLDTFAMISQGQQNSFGSYVISMASAPSDVLAVALMLKESGVGFPMRIVPLFETLADLDNAEPIIEQLFSIPWYKSYINGRQEVMIGYSDSAKDAGQIAATWGQYRAQEALTRLCKKHGIHLTLFHGRGGTVGRGGGPAHVAILSQPPGSVNGAIRVTEQGEMIRFKFGIPDIAVRSLELYCSAVMEASLIPAEPPKEEWRAIMDEMAEVGMNQYRSIIRGHEDFVPYFRATTPEQELAKLPLGSRPARRRSDGGVESLRAIPWIFAWMQIRLMLPAWLGAESALQQGVESGNLEKLREMHKKWPFFGAYLDMLDMVLAKAEPEIAEYYEKRLVGEELQGLGRLLRGKLKQVSELVKMLKKQERLIEDNKTIRQSIDVRNPYIDPLHYLQAELLYRSRKDEENAEVNKALMITMAGIASGMQNTG.

Residues His-138 and Lys-544 contribute to the active site.

This sequence belongs to the PEPCase type 1 family. It depends on Mg(2+) as a cofactor.

It catalyses the reaction oxaloacetate + phosphate = phosphoenolpyruvate + hydrogencarbonate. Its function is as follows. Forms oxaloacetate, a four-carbon dicarboxylic acid source for the tricarboxylic acid cycle. The chain is Phosphoenolpyruvate carboxylase from Marinomonas sp. (strain MWYL1).